Reading from the N-terminus, the 407-residue chain is Histone acetyltransferase mst2 (407 aa).

The region spanning 98 to 372 is the MYST-type HAT domain; it reads PQPTSIRYLY…VNPKLLRWTP (275 aa). Residues 131-156 form a C2HC MYST-type zinc finger; that stretch reads LYICESCLKYMNSDHVLQRHKMKCSW. N6-acetyllysine; by autocatalysis is present on Lys-198. Residues 241-243, Thr-243, and 248-254 contribute to the acetyl-CoA site; these read ILT and QRRGYGV. Catalysis depends on Glu-274, which acts as the Proton donor/acceptor. The acetyl-CoA site is built by Ser-278 and Ser-287.

Belongs to the MYST (SAS/MOZ) family. In terms of assembly, component of the mst2 complex composed of at least eaf6, mst2, nto1, pdp3, ptf1, ptf2 and tfg3. In terms of processing, autoacetylation at Lys-198 is required for proper function.

It is found in the cytoplasm. It localises to the nucleus. The enzyme catalyses L-lysyl-[protein] + acetyl-CoA = N(6)-acetyl-L-lysyl-[protein] + CoA + H(+). Functionally, component of the mst2 complex which is a highly specific H3 lysine 14 (H3K14) acetyltransferase that functions together with gcn5 to regulate global levels of H3K14 acetylation (H3K14ac), critical for DNA damage checkpoint activation. Negatively regulates telomere silencing. Telomere silencing is increased due to histone hypoacetylation and/or an increase in the ratio of methylated histones to acetylated histones. Telomeric histone acetylation contributes to normal meiotic progression. This Schizosaccharomyces pombe (strain 972 / ATCC 24843) (Fission yeast) protein is Histone acetyltransferase mst2 (mst2).